The chain runs to 238 residues: Monocyte to macrophage differentiation factor (238 aa).

At 1–28 (MQFRNRFQRFMNHRAPANGRYKPTCYEH) the chain is on the cytoplasmic side. The chain crosses the membrane as a helical span at residues 29-49 (AANCYTHAFLIVPAIVGSALL). Over 50–61 (HRLSDDCWEKIT) the chain is Lumenal. Residues 62–82 (AWIYGMGLCALFIVSTVFHIV) form a helical membrane-spanning segment. The Cytoplasmic segment spans residues 83-101 (SWKKSHLRTVEHCFHMCDR). Residues 102–122 (MVIYFFIAASYAPWLNLRELG) form a helical membrane-spanning segment. A topological domain (lumenal) is located at residue proline 123. A helical transmembrane segment spans residues 124–144 (LASHMRWFIWLMAAGGTIYVF). Topologically, residues 145–151 (LYHEKYK) are cytoplasmic. A helical membrane pass occupies residues 152 to 172 (VVELFFYLTMGFSPALVVTSM). Topologically, residues 173-174 (NN) are lumenal. Residues 175–195 (TDGLQELACGGLIYCLGVVFF) traverse the membrane as a helical segment. Topologically, residues 196–198 (KSD) are cytoplasmic. A helical transmembrane segment spans residues 199-219 (GIIPFAHAIWHLFVATAAAVH). Topologically, residues 220-238 (YYAIWKYLYRSPTDFIRHL) are lumenal.

It belongs to the ADIPOR family. As to expression, preferentially expressed in the brain.

The protein resides in the late endosome membrane. It is found in the lysosome membrane. Is involved in the dynamics of lysosomal membranes associated with microglial activation following brain lesion. This is Monocyte to macrophage differentiation factor from Rattus norvegicus (Rat).